Here is a 651-residue protein sequence, read N- to C-terminus: Beta-glucuronidase (651 aa).

The first 22 residues, 1–22 (MARGSAVAWAAFGPLLWGCALG), serve as a signal peptide directing secretion. N-linked (GlcNAc...) asparagine glycosylation is found at asparagine 173, asparagine 190, asparagine 272, and asparagine 420. Glutamate 451 functions as the Proton donor in the catalytic mechanism. Asparagine 631 carries N-linked (GlcNAc...) asparagine glycosylation.

Belongs to the glycosyl hydrolase 2 family. In terms of assembly, homotetramer.

The protein resides in the lysosome. The catalysed reaction is a beta-D-glucuronoside + H2O = D-glucuronate + an alcohol. With respect to regulation, inhibited by L-aspartic acid. In terms of biological role, plays an important role in the degradation of dermatan and keratan sulfates. The protein is Beta-glucuronidase (GUSB) of Pongo abelii (Sumatran orangutan).